A 312-amino-acid chain; its full sequence is Serpentine receptor class gamma-31 (312 aa).

7 helical membrane-spanning segments follow: residues 6 to 26 (LITQ…TVVF), 38 to 58 (FLKL…NFYI), 92 to 112 (FIFC…LTSI), 132 to 152 (TYIL…PLLV), 180 to 200 (FILV…IICW), 218 to 238 (LFLV…IAML), and 259 to 279 (LLSP…LIIF).

Belongs to the nematode receptor-like protein srg family.

Its subcellular location is the membrane. The polypeptide is Serpentine receptor class gamma-31 (srg-31) (Caenorhabditis elegans).